The chain runs to 321 residues: Lipoyl synthase (321 aa).

Positions 68, 73, 79, 94, 98, 101, and 308 each coordinate [4Fe-4S] cluster. Positions 80 to 297 constitute a Radical SAM core domain; sequence FNHGTATFMI…KAEALAMGFT (218 aa).

The protein belongs to the radical SAM superfamily. Lipoyl synthase family. Requires [4Fe-4S] cluster as cofactor.

It localises to the cytoplasm. It carries out the reaction [[Fe-S] cluster scaffold protein carrying a second [4Fe-4S](2+) cluster] + N(6)-octanoyl-L-lysyl-[protein] + 2 oxidized [2Fe-2S]-[ferredoxin] + 2 S-adenosyl-L-methionine + 4 H(+) = [[Fe-S] cluster scaffold protein] + N(6)-[(R)-dihydrolipoyl]-L-lysyl-[protein] + 4 Fe(3+) + 2 hydrogen sulfide + 2 5'-deoxyadenosine + 2 L-methionine + 2 reduced [2Fe-2S]-[ferredoxin]. It participates in protein modification; protein lipoylation via endogenous pathway; protein N(6)-(lipoyl)lysine from octanoyl-[acyl-carrier-protein]: step 2/2. Catalyzes the radical-mediated insertion of two sulfur atoms into the C-6 and C-8 positions of the octanoyl moiety bound to the lipoyl domains of lipoate-dependent enzymes, thereby converting the octanoylated domains into lipoylated derivatives. The protein is Lipoyl synthase of Salmonella arizonae (strain ATCC BAA-731 / CDC346-86 / RSK2980).